The primary structure comprises 508 residues: Cell division protein FtsZ (508 aa).

GTP is bound by residues 24-28, 111-113, Glu142, Arg146, and Asp190; these read GAGGN and GTG. 2 disordered regions span residues 342-389 and 428-508; these read IAET…SAPQ and VAEE…RLAN. Low complexity predominate over residues 464 to 482; the sequence is QQASAPQAQARSAQSARPQ.

It belongs to the FtsZ family. Homodimer. Polymerizes to form a dynamic ring structure in a strictly GTP-dependent manner. Interacts directly with several other division proteins.

It is found in the cytoplasm. Its function is as follows. Essential cell division protein that forms a contractile ring structure (Z ring) at the future cell division site. The regulation of the ring assembly controls the timing and the location of cell division. One of the functions of the FtsZ ring is to recruit other cell division proteins to the septum to produce a new cell wall between the dividing cells. Binds GTP and shows GTPase activity. This chain is Cell division protein FtsZ, found in Caulobacter vibrioides (strain ATCC 19089 / CIP 103742 / CB 15) (Caulobacter crescentus).